We begin with the raw amino-acid sequence, 118 residues long: Protein TusC (118 aa).

Belongs to the DsrF/TusC family. In terms of assembly, heterohexamer, formed by a dimer of trimers. The hexameric TusBCD complex contains 2 copies each of TusB, TusC and TusD. The TusBCD complex interacts with TusE.

It is found in the cytoplasm. Part of a sulfur-relay system required for 2-thiolation of 5-methylaminomethyl-2-thiouridine (mnm(5)s(2)U) at tRNA wobble positions. This chain is Protein TusC, found in Salmonella arizonae (strain ATCC BAA-731 / CDC346-86 / RSK2980).